Reading from the N-terminus, the 530-residue chain is TNF receptor-associated factor family protein DDB_G0272829 (530 aa).

The RING-type; degenerate zinc finger occupies 35–81 (CQICEGLLISSLIPNRMKALQCINGHCFCLTCWESILEIKSECPTCR). TRAF-type zinc fingers lie at residues 134-188 (RHES…KQMQ) and 189-246 (GHIL…NDND). Disordered regions lie at residues 242 to 267 (NNDN…LSSS), 391 to 432 (TTTT…DNQG), and 483 to 530 (FNQL…GTSL). Composition is skewed to low complexity over residues 253–267 (NNSN…LSSS), 391–415 (TTTT…NNNN), and 485–502 (QLSQ…SQSL). Residues 361-422 (ILEHQQQQNQ…NNNNEDEEDD (62 aa)) adopt a coiled-coil conformation. Over residues 509–530 (ITINQNQNTPSNPFSIFSGTSL) the composition is skewed to polar residues.

The protein belongs to the TNF receptor-associated factor family.

The protein localises to the cytoplasm. Functionally, probable adapter protein and signal transducer that links members of the tumor necrosis factor receptor family to different signaling pathways by association with the receptor cytoplasmic domain and kinases. The sequence is that of TNF receptor-associated factor family protein DDB_G0272829 from Dictyostelium discoideum (Social amoeba).